Consider the following 378-residue polypeptide: Ret finger protein-like 2 (378 aa).

The RING-type; degenerate zinc-finger motif lies at cysteine 101–serine 143. Positions glutamate 168–leucine 362 constitute a B30.2/SPRY domain.

In terms of tissue distribution, seems to be expressed in prostate and less abundantly in adult brain, fetal liver, and fetal kidney.

This Homo sapiens (Human) protein is Ret finger protein-like 2 (RFPL2).